The following is an 828-amino-acid chain: MHKIEKKWQKIWQEEKAFQVSNESSKPKYYVLEMLPYPSGKIHIGHVRNYSIGDVIARFMTMQGFNVLHPMGWDAFGLPAENAAIKNNSRPQDWTYSNIEYMKKQLQSMGFAYDWTREINSCDPEYYKHEQKFFLELYDRNLVYQKESLVNWDPVDNTVLANEQVVDGRGWRSGAIIEKRYLKQWFLKITDYAEELLNEIQNLKDWPAAVRVMQEEWIGKSTGVNFHFKVKYHENTTIEVFSTKPETIFGASFIGIAFNHPIIEQLICKTPEIVNFITKCSYITRSSEIDKAEKEGIFSGLYVIHPFDANIFLPVIITNFVLMDYGTGAIFGCPAHDKRDHELAIKMNLPIKQVIETGNIQEGILINSDWLNGLTSSEAKQKVIEKFEKLGIGKRSVNYRLKDWSISRQRFWGCPIPMIHCKTCGVVPVPYKDLPVTLPDDVSFDSNYNPLEHHSSWKYVNCPKCDNSAIRETDTFDTFFESSWYFTRYCNSNAVEMTDKKACNYWLPVDKYIGGIEHAVMHLLYARFFTKLMNEHNYVSIREPFKGLFTQGMVLHATYKDENNNWLYPAEVVKKGNEFFHKENNTRVVQGRIEKMSKSKKNIIDLETIREQYSADAIRLFVLSDSPPEKDLEWSASGIEGCSRFINKLENMFEAIFSLKDDMKSEINKDLNRLIHLTIKHVADDIKTFSLNRAIARMRTLTNAIYYEISKDRIDVRTIKYGFNVLVQLLNPFIPHITEEIWQKLGNKERLYKSVFAEFDESILELSTYIMAVQVNGKLRDTYEFDVDISEDEVKQITVNLPKVQKFLAGKEPRNIILVPRKIVNIIV.

The short motif at 36-46 (PYPSGKIHIGH) is the 'HIGH' region element. Residues 595-599 (KMSKS) carry the 'KMSKS' region motif. K598 provides a ligand contact to ATP.

Belongs to the class-I aminoacyl-tRNA synthetase family.

The protein localises to the cytoplasm. The catalysed reaction is tRNA(Leu) + L-leucine + ATP = L-leucyl-tRNA(Leu) + AMP + diphosphate. This chain is Leucine--tRNA ligase, found in Rickettsia prowazekii (strain Madrid E).